Here is a 248-residue protein sequence, read N- to C-terminus: Fasciclin-like arabinogalactan protein 19 (248 aa).

The first 29 residues, 1–29 (MAKISSASCFRAIFLGALIILCLPHPSTG), serve as a signal peptide directing secretion. The FAS1 domain occupies 35–166 (LERAIAILRV…IAVHGLADLL (132 aa)). 2 N-linked (GlcNAc...) asparagine glycosylation sites follow: Asn114 and Asn136. The segment covering 213-226 (SPSVEEVSPSPSWG) has biased composition (low complexity). The interval 213–248 (SPSVEEVSPSPSWGEGEEDFIVGDEGGPLDGRNNGF) is disordered.

It belongs to the fasciclin-like AGP family.

The protein localises to the secreted. Its function is as follows. May be a cell surface adhesion protein. In Arabidopsis thaliana (Mouse-ear cress), this protein is Fasciclin-like arabinogalactan protein 19 (FLA19).